A 246-amino-acid polypeptide reads, in one-letter code: Probable transcriptional regulatory protein HSM_1763 (246 aa).

The protein belongs to the TACO1 family.

The protein localises to the cytoplasm. The chain is Probable transcriptional regulatory protein HSM_1763 from Histophilus somni (strain 2336) (Haemophilus somnus).